The following is a 598-amino-acid chain: Elongation factor 4 (598 aa).

The tr-type G domain maps to 2–183 (KKIRNFCIIA…AIIEKIPPPK (182 aa)). GTP is bound by residues 14 to 19 (DHGKST) and 130 to 133 (NKVD).

Belongs to the TRAFAC class translation factor GTPase superfamily. Classic translation factor GTPase family. LepA subfamily.

It localises to the cell inner membrane. It carries out the reaction GTP + H2O = GDP + phosphate + H(+). Its function is as follows. Required for accurate and efficient protein synthesis under certain stress conditions. May act as a fidelity factor of the translation reaction, by catalyzing a one-codon backward translocation of tRNAs on improperly translocated ribosomes. Back-translocation proceeds from a post-translocation (POST) complex to a pre-translocation (PRE) complex, thus giving elongation factor G a second chance to translocate the tRNAs correctly. Binds to ribosomes in a GTP-dependent manner. This Flavobacterium johnsoniae (strain ATCC 17061 / DSM 2064 / JCM 8514 / BCRC 14874 / CCUG 350202 / NBRC 14942 / NCIMB 11054 / UW101) (Cytophaga johnsonae) protein is Elongation factor 4.